We begin with the raw amino-acid sequence, 112 residues long: Urocortin-2 (112 aa).

Positions 1 to 22 are cleaved as a signal peptide; that stretch reads MTRCALLLLMVLMLGRVLVVPV. A propeptide spanning residues 23–70 is cleaved from the precursor; it reads TPIPTFQLRPQNSPQTTPRPAASESPSAAPTWPWAAQSHCSPTRHPGS. Residues 27–66 form a disordered region; it reads TFQLRPQNSPQTTPRPAASESPSAAPTWPWAAQSHCSPTR. The segment covering 38–58 has biased composition (low complexity); that stretch reads TTPRPAASESPSAAPTWPWAA.

This sequence belongs to the sauvagine/corticotropin-releasing factor/urotensin I family. In terms of assembly, binds with high affinity to CRF receptors 2-alpha and 2-beta. Post-translationally, glycosylated.

Its subcellular location is the secreted. Suppresses food intake, delays gastric emptying and decreases heat-induced edema. Might represent an endogenous ligand for maintaining homeostasis after stress. This Homo sapiens (Human) protein is Urocortin-2 (UCN2).